The sequence spans 395 residues: Ketol-acid reductoisomerase, mitochondrial (395 aa).

A mitochondrion-targeting transit peptide spans 1 to 47 (MLRTQAARLICNSRVITAKRTFALATRAAAYSRPAARFVKPMITTRG). The KARI N-terminal Rossmann domain occupies 57-246 (VETVYERADW…AIGSGYVYQT (190 aa)). NADP(+) is bound by residues 84–93 (GYGSQGYGQG), 108–113 (RKDGAS), and 146–150 (SDAAQ). Histidine 171 is a catalytic residue. Residues 247–394 (TFEREVNSDL…KEVRKLRPEN (148 aa)) enclose the KARI C-terminal knotted domain. Residues aspartate 255, glutamate 259, glutamate 291, and glutamate 295 each contribute to the Mg(2+) site. Serine 317 provides a ligand contact to substrate. Serine 355 bears the Phosphoserine mark. The tract at residues 363–395 (DYREKLEKELDTIRNMEIWKVGKEVRKLRPENQ) is hydrophilic.

The protein belongs to the ketol-acid reductoisomerase family. The cofactor is Mg(2+).

The protein localises to the mitochondrion. The catalysed reaction is (2R)-2,3-dihydroxy-3-methylbutanoate + NADP(+) = (2S)-2-acetolactate + NADPH + H(+). It catalyses the reaction (2R,3R)-2,3-dihydroxy-3-methylpentanoate + NADP(+) = (S)-2-ethyl-2-hydroxy-3-oxobutanoate + NADPH + H(+). Its pathway is amino-acid biosynthesis; L-isoleucine biosynthesis; L-isoleucine from 2-oxobutanoate: step 2/4. It functions in the pathway amino-acid biosynthesis; L-valine biosynthesis; L-valine from pyruvate: step 2/4. Involved in the biosynthesis of branched-chain amino acids (BCAA). Catalyzes the second common step in the parallel biosynthesis of isoleucine and valine. Converts alpha-aceto-alpha-hydroxybutyrate (AHB) to alpha,beta-dihydroxy-beta-methylvalerate (DHMV) and alpha-acetolactate (AL) to alpha,beta-dihydroxy-isovalerate (DHV) in isoleucine and valine biosynthesis, respectively. In Saccharomyces cerevisiae (strain ATCC 204508 / S288c) (Baker's yeast), this protein is Ketol-acid reductoisomerase, mitochondrial.